The primary structure comprises 121 residues: MARIVGVELPNNKKTFVALTYIYGIGPARAKEILKNTNIDGDKRVKDLTDEEISRISKYITDHYKVEGELRQEVERNIKRLIEIGCYRGIRHKIGLPVRGQKTHSNARTRKGPRASRIKKK.

The tract at residues 97 to 121 (PVRGQKTHSNARTRKGPRASRIKKK) is disordered. Basic residues predominate over residues 101 to 121 (QKTHSNARTRKGPRASRIKKK).

It belongs to the universal ribosomal protein uS13 family. As to quaternary structure, part of the 30S ribosomal subunit. Forms a loose heterodimer with protein S19. Forms two bridges to the 50S subunit in the 70S ribosome.

In terms of biological role, located at the top of the head of the 30S subunit, it contacts several helices of the 16S rRNA. In the 70S ribosome it contacts the 23S rRNA (bridge B1a) and protein L5 of the 50S subunit (bridge B1b), connecting the 2 subunits; these bridges are implicated in subunit movement. Contacts the tRNAs in the A and P-sites. This Kosmotoga olearia (strain ATCC BAA-1733 / DSM 21960 / TBF 19.5.1) protein is Small ribosomal subunit protein uS13.